A 412-amino-acid polypeptide reads, in one-letter code: Histone-lysine N-methyltransferase SUV39H1 (412 aa).

An interaction with SIRT1 region spans residues 1 to 89; that stretch reads MAENLKGCSV…LKCVRILKQF (89 aa). The region spanning 43–101 is the Chromo domain; the sequence is FEVEYLCDYKKIREQEYYLVKWRGYPDSESTWEPRQNLKCVRILKQFHKDLERELLRRH. A Pre-SET domain is found at 179–240; it reads VGCECQDCLW…DCPNRVVQKG (62 aa). Residues Cys-181, Cys-183, Cys-186, Cys-194, Cys-195, Cys-222, Cys-226, Cys-228, and Cys-232 each coordinate Zn(2+). The SET domain maps to 243 to 366; sequence YDLCIFRTDD…AGEELTFDYN (124 aa). An S-adenosyl-L-methionine-binding site is contributed by 254-256; the sequence is RGW. The tract at residues 255 to 377 is mediates interaction with MECOM; it reads GWGVRTLEKI…QVDPVDMEST (123 aa). Residue Lys-266 is modified to N6-acetyllysine. S-adenosyl-L-methionine is bound by residues Tyr-297 and 323–324; that span reads NH. Cys-326 provides a ligand contact to Zn(2+). Phosphoserine is present on Ser-391. The Post-SET domain occupies 396–412; the sequence is VRIECKCGTESCRKYLF. Zn(2+) is bound by residues Cys-400, Cys-402, and Cys-407.

It belongs to the class V-like SAM-binding methyltransferase superfamily. Histone-lysine methyltransferase family. Suvar3-9 subfamily. As to quaternary structure, interacts with H3 and H4 histones. Interacts with GFI1B, DNMT3B, CBX1, CBX4, CCAR2, MBD1, RUNX1, RUNX3, MYOD1, SMAD5 and RB1. Interacts with SBF1 through the SET domain. Interacts with HDAC1 and HDAC2 through the N-terminus and associates with the core histone deacetylase complex composed of HDAC1, HDAC2, RBBP4 and RBBP7. Component of the eNoSC complex, composed of SIRT1, SUV39H1 and RRP8. Interacts (via SET domain) with MECOM; enhances MECOM transcriptional repression activity. Interacts with LMNA; the interaction increases stability of SUV39H1. The large PER complex involved in the histone methylation is composed of at least PER2, CBX3, TRIM28, SUV39H1 and/or SUV39H2; CBX3 mediates the formation of the complex. (Microbial infection) Interacts with HTLV-1 Tax protein, leading to abrogate Tax transactivation of HTLV-1 LTR. Phosphorylated on serine residues, and to a lesser degree, on threonine residues. The phosphorylated form is stabilized by SBF1 and is less active in its transcriptional repressor function. In terms of processing, ubiquitinated by the DCX(DCAF13) E3 ubiquitin ligase complex, leading to its degradation. Post-translationally, acetylated at Lys-266, leading to inhibition of enzyme activity. SIRT1-mediated deacetylation relieves this inhibition. (Microbial infection) A higher molecular weight form is also seen in M.bovis infected cells.

It localises to the nucleus. It is found in the nucleus lamina. Its subcellular location is the nucleoplasm. The protein localises to the chromosome. The protein resides in the centromere. It localises to the cytoplasmic vesicle. It is found in the phagosome lumen. Its subcellular location is the cell membrane. The enzyme catalyses L-lysyl(9)-[histone H3] + 3 S-adenosyl-L-methionine = N(6),N(6),N(6)-trimethyl-L-lysyl(9)-[histone H3] + 3 S-adenosyl-L-homocysteine + 3 H(+). With respect to regulation, inhibited by S-adenosyl-L-homocysteine. Negatively regulated by CCAR2. Histone methyltransferase that specifically trimethylates 'Lys-9' of histone H3 using monomethylated H3 'Lys-9' as substrate. Also weakly methylates histone H1 (in vitro). H3 'Lys-9' trimethylation represents a specific tag for epigenetic transcriptional repression by recruiting HP1 (CBX1, CBX3 and/or CBX5) proteins to methylated histones. Mainly functions in heterochromatin regions, thereby playing a central role in the establishment of constitutive heterochromatin at pericentric and telomere regions. H3 'Lys-9' trimethylation is also required to direct DNA methylation at pericentric repeats. SUV39H1 is targeted to histone H3 via its interaction with RB1 and is involved in many processes, such as repression of MYOD1-stimulated differentiation, regulation of the control switch for exiting the cell cycle and entering differentiation, repression by the PML-RARA fusion protein, BMP-induced repression, repression of switch recombination to IgA and regulation of telomere length. Component of the eNoSC (energy-dependent nucleolar silencing) complex, a complex that mediates silencing of rDNA in response to intracellular energy status and acts by recruiting histone-modifying enzymes. The eNoSC complex is able to sense the energy status of cell: upon glucose starvation, elevation of NAD(+)/NADP(+) ratio activates SIRT1, leading to histone H3 deacetylation followed by dimethylation of H3 at 'Lys-9' (H3K9me2) by SUV39H1 and the formation of silent chromatin in the rDNA locus. Recruited by the large PER complex to the E-box elements of the circadian target genes such as PER2 itself or PER1, contributes to the conversion of local chromatin to a heterochromatin-like repressive state through H3 'Lys-9' trimethylation. Its function is as follows. (Microbial infection) Plays a role in defense against mycobacterial infections. Methylates M.tuberculosis HupB on 'Lys-140', probably methylates HupB of M.bovis also. Methylation has an inhibitory effect on mycobacterial growth in the host. Macrophages expressing about 60% SUV39H1 are slightly more susceptible to M.bovis or M.tuberculosis infection. Chaetocin (an inhibitor of this enzyme) increases macrophage survival of M.tuberculosis. This protein inhibits biofilm formation by M.tuberculosis via 'Lys-140' trimethylation. This is Histone-lysine N-methyltransferase SUV39H1 (SUV39H1) from Homo sapiens (Human).